Reading from the N-terminus, the 501-residue chain is Endonuclease domain-containing 1 protein (501 aa).

The N-terminal stretch at methionine 1 to alanine 21 is a signal peptide. Lysine 408 is subject to N6-acetyllysine.

Belongs to the DNA/RNA non-specific endonuclease family. As to quaternary structure, interacts with RNF26; this interaction is important to modulate innate immune signaling through the cGAS-STING pathway.

It localises to the secreted. Its function is as follows. May act as a DNase and a RNase. Plays a role in the modulation of innate immune signaling through the cGAS-STING pathway by interacting with RNF26. The sequence is that of Endonuclease domain-containing 1 protein (Endod1) from Mus musculus (Mouse).